The chain runs to 1143 residues: DNA polymerase II large subunit (1143 aa).

The protein belongs to the archaeal DNA polymerase II family. Heterodimer of a large subunit and a small subunit.

The enzyme catalyses DNA(n) + a 2'-deoxyribonucleoside 5'-triphosphate = DNA(n+1) + diphosphate. The catalysed reaction is Exonucleolytic cleavage in the 3'- to 5'-direction to yield nucleoside 5'-phosphates.. In terms of biological role, possesses two activities: a DNA synthesis (polymerase) and an exonucleolytic activity that degrades single-stranded DNA in the 3'- to 5'-direction. Has a template-primer preference which is characteristic of a replicative DNA polymerase. This chain is DNA polymerase II large subunit (polC), found in Archaeoglobus fulgidus (strain ATCC 49558 / DSM 4304 / JCM 9628 / NBRC 100126 / VC-16).